Consider the following 167-residue polypeptide: Small ribosomal subunit protein uS5 (167 aa).

The 64-residue stretch at 11–74 (LQEKLIAVNR…EKARRAMINV (64 aa)) folds into the S5 DRBM domain.

It belongs to the universal ribosomal protein uS5 family. In terms of assembly, part of the 30S ribosomal subunit. Contacts proteins S4 and S8.

Its function is as follows. With S4 and S12 plays an important role in translational accuracy. Functionally, located at the back of the 30S subunit body where it stabilizes the conformation of the head with respect to the body. The sequence is that of Small ribosomal subunit protein uS5 from Yersinia pseudotuberculosis serotype O:1b (strain IP 31758).